The primary structure comprises 455 residues: Chromosomal replication initiator protein DnaA (455 aa).

The segment at 1–75 (MDTNNNIEKE…EILSQNKVGM (75 aa)) is domain I, interacts with DnaA modulators. The interval 75 to 106 (MHLAHSVDVRIEVAPKIQISAQPNINYKAVKT) is domain II. The tract at residues 107 to 321 (SVKDSYTFEN…GAIIKISVNA (215 aa)) is domain III, AAA+ region. ATP is bound by residues G151, G153, K154, and T155. The tract at residues 322–455 (NLMNAPIDLN…DKKTAFHSSE (134 aa)) is domain IV, binds dsDNA.

It belongs to the DnaA family. In terms of assembly, oligomerizes as a right-handed, spiral filament on DNA at oriC.

The protein resides in the cytoplasm. Plays an essential role in the initiation and regulation of chromosomal replication. ATP-DnaA binds to the origin of replication (oriC) to initiate formation of the DNA replication initiation complex once per cell cycle. Binds the DnaA box (a 9 base pair repeat at the origin) and separates the double-stranded (ds)DNA. Forms a right-handed helical filament on oriC DNA; dsDNA binds to the exterior of the filament while single-stranded (ss)DNA is stabiized in the filament's interior. The ATP-DnaA-oriC complex binds and stabilizes one strand of the AT-rich DNA unwinding element (DUE), permitting loading of DNA polymerase. After initiation quickly degrades to an ADP-DnaA complex that is not apt for DNA replication. Binds acidic phospholipids. This chain is Chromosomal replication initiator protein DnaA, found in Helicobacter pylori (strain Shi470).